A 408-amino-acid polypeptide reads, in one-letter code: LIN1-like protein (408 aa).

The segment at 1–161 (MKRTLRNPGN…SVPSSPKRMS (161 aa)) is disordered. Residues 41-52 (YYESESEEDEDQ) show a composition bias toward acidic residues. Basic and acidic residues-rich tracts occupy residues 53–62 (ILNKEKKEGQ), 73–109 (DEKR…KEVL), and 119–129 (NGKYSKLRYED). A GYF domain is found at 344–402 (SSQYNFKWEFDDKTYGPYTASQIQAWSNEGYFTDAKHAAFIQLANMDEWMYPNNICFCD).

Belongs to the LIN1 family.

This Schizosaccharomyces pombe (strain 972 / ATCC 24843) (Fission yeast) protein is LIN1-like protein.